Here is a 265-residue protein sequence, read N- to C-terminus: MNTLQAIVLAVIEGITEFLPVSSTGHMIIASSFFGIAHEDFTKLFTIVIQLGAILSVVVLYFKRFFQTLDFYFKLLVAFIPAVVLGLLLSDFIDGLLENPVTVAVSLLIGGLILLKVDEWFNNPNAAETSQKITYLQALKIGLFQCIAMIPGVSRSGASIVGGMSQKLSRTTAAEFSFFLAVPTMLGATVKKCYDYYKAGFELSHDQVNILIIGNVVAFIVALLAIKTFISFLTKNGFKVFGYYRIIAGIILLLIHFFIHPLTII.

8 helical membrane-spanning segments follow: residues 18-38, 41-61, 69-89, 95-115, 133-153, 171-191, 210-230, and 245-265; these read FLPV…GIAH, FTKL…VVLY, LDFY…GLLL, GLLE…LILL, ITYL…IPGV, TTAA…ATVK, ILII…KTFI, and RIIA…LTII.

Belongs to the UppP family.

The protein resides in the cell inner membrane. It carries out the reaction di-trans,octa-cis-undecaprenyl diphosphate + H2O = di-trans,octa-cis-undecaprenyl phosphate + phosphate + H(+). Its function is as follows. Catalyzes the dephosphorylation of undecaprenyl diphosphate (UPP). Confers resistance to bacitracin. This is Undecaprenyl-diphosphatase (uppP) from Flavobacterium johnsoniae (strain ATCC 17061 / DSM 2064 / JCM 8514 / BCRC 14874 / CCUG 350202 / NBRC 14942 / NCIMB 11054 / UW101) (Cytophaga johnsonae).